Consider the following 382-residue polypeptide: MIOREX complex component 5 (382 aa).

Residues 1–12 (MRRTFSQLATRL) constitute a mitochondrion transit peptide.

As to quaternary structure, associates with the mitochondrial ribosome.

The protein localises to the mitochondrion. Its function is as follows. Component of MIOREX complexes, large expressome-like assemblies of ribosomes with factors involved in all the steps of post-transcriptional gene expression. This is MIOREX complex component 5 from Saccharomyces cerevisiae (strain ATCC 204508 / S288c) (Baker's yeast).